Consider the following 844-residue polypeptide: DNA mismatch repair protein MutS (844 aa).

ATP is bound at residue 602 to 609 (GPNMSGKS).

The protein belongs to the DNA mismatch repair MutS family.

This protein is involved in the repair of mismatches in DNA. It is possible that it carries out the mismatch recognition step. This protein has a weak ATPase activity. The polypeptide is DNA mismatch repair protein MutS (Streptococcus pneumoniae serotype 19F (strain G54)).